Reading from the N-terminus, the 381-residue chain is Prostatic acid phosphatase (381 aa).

A signal peptide spans 1 to 31 (MRAVPLPLSRTASLSLGFLLLLSLCLDPGQA). Residue Arg42 coordinates substrate. His43 serves as the catalytic Nucleophile. Arg46 contacts substrate. N-linked (GlcNAc...) asparagine glycosylation occurs at Asn93. Arg110 is a substrate binding site. Cystine bridges form between Cys160–Cys371, Cys214–Cys312, and Cys346–Cys350. Asn219 is a glycosylation site (N-linked (GlcNAc...) asparagine). His288 is a binding site for substrate. Catalysis depends on Asp289, which acts as the Proton donor. An N-linked (GlcNAc...) asparagine glycan is attached at Asn332.

Belongs to the histidine acid phosphatase family. In terms of assembly, homodimer; dimer formation is required for phosphatase activity. As to expression, expressed in salivary gland, thymus and thyroid gland. Widely expressed in prostate lobes, brain, kidney, liver, lung, muscle, placenta, salivary gland, spleen, thyroid and thymus. Locates to Schwann cells and fibroblasts. Expressed in peptidergic and non-peptidergic nociceptive (pain-sensing) neurons. Preferentially expressed in non-peptidergic doral root ganglia neurons.

It localises to the secreted. Its subcellular location is the cell membrane. It is found in the lysosome membrane. The catalysed reaction is a phosphate monoester + H2O = an alcohol + phosphate. It catalyses the reaction a ribonucleoside 5'-phosphate + H2O = a ribonucleoside + phosphate. The enzyme catalyses 1-(9Z-octadecenoyl)-sn-glycero-3-phosphate + H2O = 1-(9Z-octadecenoyl)-sn-glycerol + phosphate. It carries out the reaction O-phospho-L-tyrosyl-[protein] + H2O = L-tyrosyl-[protein] + phosphate. Functionally, a non-specific tyrosine phosphatase that dephosphorylates a diverse number of substrates under acidic conditions (pH 4-6) including alkyl, aryl, and acyl orthophosphate monoesters and phosphorylated proteins. Has lipid phosphatase activity and inactivates lysophosphatidic acid in seminal plasma. Its function is as follows. In addition to its tyrosine phosphatase activity, also has ecto-5'-nucleotidase activity in dorsal root ganglion (DRG) neurons. Generates adenosine from AMP. This extracellular adenosine leads to a decrease in chronic pain by activating A1R in nociceptive neurons. This Mus musculus (Mouse) protein is Prostatic acid phosphatase (Acp3).